We begin with the raw amino-acid sequence, 188 residues long: Peptidyl-prolyl cis-trans isomerase H (188 aa).

The residue at position 2 (A2) is an N-acetylalanine. The region spanning 14–176 is the PPIase cyclophilin-type domain; the sequence is FFDVSIGGQE…WTHSLTCPAL (163 aa).

It belongs to the cyclophilin-type PPIase family. PPIase H subfamily. In terms of assembly, interacts directly with PRPF4. Part of a heteromeric complex containing PPIH, PRPF3 and PRPF4 that is stable in the absence of RNA. Component of the U4/U6-U5 tri-snRNP complex composed of the U4, U6 and U5 snRNAs and at least PRPF3, PRPF4, PRPF6, PRPF8, PRPF31, SNRNP200, TXNL4A, SNRNP40, DDX23, CD2BP2, PPIH, SNU13, EFTUD2, SART1 and USP39. Heterodimer with PRPF18. Heterodimer with PRPF18.

Its subcellular location is the nucleus speckle. It is found in the cytoplasm. The enzyme catalyses [protein]-peptidylproline (omega=180) = [protein]-peptidylproline (omega=0). Its activity is regulated as follows. Inhibited by cyclosporin A. Its function is as follows. PPIase that catalyzes the cis-trans isomerization of proline imidic peptide bonds in oligopeptides and may therefore assist protein folding. Participates in pre-mRNA splicing. May play a role in the assembly of the U4/U5/U6 tri-snRNP complex, one of the building blocks of the spliceosome. May act as a chaperone. The polypeptide is Peptidyl-prolyl cis-trans isomerase H (Ppih) (Mus musculus (Mouse)).